A 264-amino-acid chain; its full sequence is 14-3-3 protein homolog (264 aa).

The segment covering 236-258 (SEAPAATEEQQQSSQAPAAQPTE) has biased composition (low complexity). The segment at 236–264 (SEAPAATEEQQQSSQAPAAQPTEGKADQE) is disordered.

This sequence belongs to the 14-3-3 family.

This Candida albicans (strain SC5314 / ATCC MYA-2876) (Yeast) protein is 14-3-3 protein homolog (BMH1).